The sequence spans 234 residues: Peptidyl-prolyl cis-trans isomerase, rhodopsin-specific isozyme (234 aa).

The signal sequence occupies residues 1–19 (MNILKILILLELIYTCVSG). Residues 29–187 (YMDVKHQKKP…DPVIIVNCGE (159 aa)) form the PPIase cyclophilin-type domain. Residue asparagine 67 is glycosylated (N-linked (GlcNAc...) asparagine). A helical membrane pass occupies residues 202-222 (ILGWIKAAGLPFCSSFIVLMI).

The protein belongs to the cyclophilin-type PPIase family. Expressed specifically in photoreceptor cells.

It is found in the membrane. The enzyme catalyses [protein]-peptidylproline (omega=180) = [protein]-peptidylproline (omega=0). Functionally, PPIases accelerate the folding of proteins. It catalyzes the cis-trans isomerization of proline imidic peptide bonds in oligopeptides. Acts on the folding of rhodopsin RH1 and RH2 (but not RH3) and is required for visual transduction. The protein is Peptidyl-prolyl cis-trans isomerase, rhodopsin-specific isozyme (NINAA) of Calliphora vicina (Blue blowfly).